Here is a 485-residue protein sequence, read N- to C-terminus: N-succinylglutamate 5-semialdehyde dehydrogenase (485 aa).

220-225 (GSANTG) serves as a coordination point for NAD(+). Catalysis depends on residues E243 and C278.

This sequence belongs to the aldehyde dehydrogenase family. AstD subfamily.

The catalysed reaction is N-succinyl-L-glutamate 5-semialdehyde + NAD(+) + H2O = N-succinyl-L-glutamate + NADH + 2 H(+). It participates in amino-acid degradation; L-arginine degradation via AST pathway; L-glutamate and succinate from L-arginine: step 4/5. Functionally, catalyzes the NAD-dependent reduction of succinylglutamate semialdehyde into succinylglutamate. The sequence is that of N-succinylglutamate 5-semialdehyde dehydrogenase from Vibrio cholerae serotype O1 (strain ATCC 39541 / Classical Ogawa 395 / O395).